Consider the following 389-residue polypeptide: Probable peptidoglycan glycosyltransferase FtsW (389 aa).

Residues 1–14 (MPIRDWRQQSQRWP) lie on the Cytoplasmic side of the membrane. A helical transmembrane segment spans residues 15 to 35 (IDYWLIGALAILITLGLTMVA). Over 36-57 (SSSIAISEKRFGDPTHYLLRQM) the chain is Periplasmic. A helical transmembrane segment spans residues 58 to 78 (FSMGLGLMAAYIVLKIPLSFW). The Cytoplasmic segment spans residues 79–84 (RKHRGQ). Residues 85–105 (LFIVGLVLLVLVLVFGREING) traverse the membrane as a helical segment. At 106 to 111 (SKRWLP) the chain is on the periplasmic side. A helical transmembrane segment spans residues 112–132 (LVLMNFQVSEFMKIAVVVFMA). Over 133-144 (GYLDRHATAVRE) the chain is Cytoplasmic. A helical transmembrane segment spans residues 145–165 (SFEAVIRLALPFGVMAILLLL). At 166–168 (EPD) the chain is on the periplasmic side. A helical transmembrane segment spans residues 169 to 189 (FGSTFVIAVIITGMLLIAGAP). Residues 190 to 191 (WR) are Cytoplasmic-facing. Residues 192–212 (FFVMTVLPIATLLVMMVITSP) traverse the membrane as a helical segment. The Periplasmic portion of the chain corresponds to 213-268 (YRMARVTNFLDPWSDPFGNGYQLTQALIASGRGEWFGVGIGESVQKLLYLPDAHTD). Residues 269-289 (FLFSIYAEEYGLIGVAFLALL) traverse the membrane as a helical segment. The Cytoplasmic segment spans residues 290-310 (YLTLLYRCFRIGRKAFNQTHY). The chain crosses the membrane as a helical span at residues 311-331 (FGGLIAYGVGIWIVLQAMINM). The Periplasmic segment spans residues 332–344 (GVNLGLFPTKGLT). A helical transmembrane segment spans residues 345–365 (LPFMSYGGSSVLMLFIGVAMV). Over 366-389 (LRVDLETRQAVLEHSVDESGQGKR) the chain is Cytoplasmic.

This sequence belongs to the SEDS family. FtsW subfamily.

It localises to the cell inner membrane. It carries out the reaction [GlcNAc-(1-&gt;4)-Mur2Ac(oyl-L-Ala-gamma-D-Glu-L-Lys-D-Ala-D-Ala)](n)-di-trans,octa-cis-undecaprenyl diphosphate + beta-D-GlcNAc-(1-&gt;4)-Mur2Ac(oyl-L-Ala-gamma-D-Glu-L-Lys-D-Ala-D-Ala)-di-trans,octa-cis-undecaprenyl diphosphate = [GlcNAc-(1-&gt;4)-Mur2Ac(oyl-L-Ala-gamma-D-Glu-L-Lys-D-Ala-D-Ala)](n+1)-di-trans,octa-cis-undecaprenyl diphosphate + di-trans,octa-cis-undecaprenyl diphosphate + H(+). Its pathway is cell wall biogenesis; peptidoglycan biosynthesis. Functionally, peptidoglycan polymerase that is essential for cell division. This chain is Probable peptidoglycan glycosyltransferase FtsW, found in Hydrogenovibrio crunogenus (strain DSM 25203 / XCL-2) (Thiomicrospira crunogena).